We begin with the raw amino-acid sequence, 209 residues long: Probable GTP-binding protein EngB (209 aa).

The EngB-type G domain occupies 27–201 (SGVEIAFAGR…ATKLDSWFAE (175 aa)). GTP is bound by residues 35 to 42 (GRSNAGKS), 62 to 66 (GRTQL), 80 to 83 (DLPG), 147 to 150 (TKAD), and 180 to 182 (YSA). Mg(2+) is bound by residues serine 42 and threonine 64.

The protein belongs to the TRAFAC class TrmE-Era-EngA-EngB-Septin-like GTPase superfamily. EngB GTPase family. Requires Mg(2+) as cofactor.

Necessary for normal cell division and for the maintenance of normal septation. The polypeptide is Probable GTP-binding protein EngB (Glaesserella parasuis serovar 5 (strain SH0165) (Haemophilus parasuis)).